The following is a 147-amino-acid chain: Sentan (147 aa).

Positions 14–34 (RLEGEPNPPAAPTSTLAPKNM) are disordered. Polar residues predominate over residues 25–34 (PTSTLAPKNM).

This sequence belongs to the S-100 family.

It is found in the cell projection. The protein localises to the cilium. Its function is as follows. May be a component of the linker structure that bridges the ciliary membrane and peripheral singlet microtubules. This is Sentan (SNTN) from Bos taurus (Bovine).